The chain runs to 345 residues: MAGINQTKCDLGFQITFNTVYRFSQFYTFSVSSFAVPGLIYFMFKRLFQLYFHGNLKTLLIAYFISILLYAVMLCFAFGYQFFVPFFIKSNCDLIINKTLFKYIHTSVIFLLTTPMMFPLGFSIERFTAMAMASRYENIRTLIGPVLVIFLIIPNCIIFYFLFQHETYDDTFISFLMLPNTTAVNFNTYLWFLLYLNIGNLALNVLLLLVHRKFKRRLLLHKTSLSTRYAIEEISQSSKFTLIITFTHLLFFGCNTICSILVRVLGEPFFGSFINHSVARGVNCAVPTYNLVIVVVGFVSLSKLNSRRQQEVQTTVQLKTTGKEGARNYDNITANQWATITQIGF.

Residues 1–22 are Extracellular-facing; that stretch reads MAGINQTKCDLGFQITFNTVYR. A glycan (N-linked (GlcNAc...) asparagine) is linked at asparagine 5. A helical membrane pass occupies residues 23 to 43; that stretch reads FSQFYTFSVSSFAVPGLIYFM. At 44-58 the chain is on the cytoplasmic side; it reads FKRLFQLYFHGNLKT. A helical membrane pass occupies residues 59-79; sequence LLIAYFISILLYAVMLCFAFG. Over 80–103 the chain is Extracellular; it reads YQFFVPFFIKSNCDLIINKTLFKY. Asparagine 97 is a glycosylation site (N-linked (GlcNAc...) asparagine). A helical membrane pass occupies residues 104 to 124; sequence IHTSVIFLLTTPMMFPLGFSI. The Cytoplasmic segment spans residues 125 to 142; it reads ERFTAMAMASRYENIRTL. Residues 143-163 traverse the membrane as a helical segment; that stretch reads IGPVLVIFLIIPNCIIFYFLF. The Extracellular portion of the chain corresponds to 164-189; sequence QHETYDDTFISFLMLPNTTAVNFNTY. Asparagine 180 is a glycosylation site (N-linked (GlcNAc...) asparagine). A helical transmembrane segment spans residues 190-210; the sequence is LWFLLYLNIGNLALNVLLLLV. Residues 211 to 241 lie on the Cytoplasmic side of the membrane; it reads HRKFKRRLLLHKTSLSTRYAIEEISQSSKFT. A helical membrane pass occupies residues 242–262; the sequence is LIITFTHLLFFGCNTICSILV. Residues 263–280 are Extracellular-facing; the sequence is RVLGEPFFGSFINHSVAR. N-linked (GlcNAc...) asparagine glycosylation is present at asparagine 275. Residues 281 to 301 form a helical membrane-spanning segment; that stretch reads GVNCAVPTYNLVIVVVGFVSL. At 302-345 the chain is on the cytoplasmic side; sequence SKLNSRRQQEVQTTVQLKTTGKEGARNYDNITANQWATITQIGF.

It belongs to the nematode receptor-like protein srb family. In terms of tissue distribution, expressed in the head sensory neurons ASI, ASK and AWB. Not expressed in male somatic gonads or sperm.

It is found in the cell membrane. The protein resides in the perikaryon. It localises to the cell projection. Its subcellular location is the dendrite. In terms of biological role, G-protein coupled receptor that antagonizes the negative effects of the gcy-35 oxygen sensor on spermatogenesis. This leads to the maintenance of mitochondrial function in developing spermatocytes and/or spermatids prior to testis maturation during the early larval stages. Regulates the navigational capacity of sperm during hyperoxic conditions ensuring the proper targeting of sperm derived from males to the fertilization site in the uterus of hermaphrodites. May act in the same signaling pathway as the neuropeptide flp-21. The chain is Serpentine receptor class beta-13 from Caenorhabditis elegans.